The chain runs to 306 residues: D-alanine--D-alanine ligase (306 aa).

Residues Glu18 and Ser150 contribute to the active site. An ATP-grasp domain is found at 104–303; the sequence is KMLWKAFGLP…FEQLVVKILE (200 aa). 134–189 serves as a coordination point for ATP; sequence VAKLGLPLMVKPSLEGSSVGLTKVKAVEELKSAVEYALKFDNTILIEEWLAGDELT. The Mg(2+) site is built by Asp257, Glu270, and Asn272. Ser281 is an active-site residue.

Belongs to the D-alanine--D-alanine ligase family. Requires Mg(2+) as cofactor. It depends on Mn(2+) as a cofactor.

It localises to the cytoplasm. The catalysed reaction is 2 D-alanine + ATP = D-alanyl-D-alanine + ADP + phosphate + H(+). The protein operates within cell wall biogenesis; peptidoglycan biosynthesis. Functionally, cell wall formation. The chain is D-alanine--D-alanine ligase from Haemophilus influenzae (strain ATCC 51907 / DSM 11121 / KW20 / Rd).